The primary structure comprises 413 residues: Glutamate-1-semialdehyde 2,1-aminomutase (413 aa).

At lysine 260 the chain carries N6-(pyridoxal phosphate)lysine.

This sequence belongs to the class-III pyridoxal-phosphate-dependent aminotransferase family. HemL subfamily. Pyridoxal 5'-phosphate is required as a cofactor.

It is found in the cytoplasm. It catalyses the reaction (S)-4-amino-5-oxopentanoate = 5-aminolevulinate. It participates in porphyrin-containing compound metabolism; protoporphyrin-IX biosynthesis; 5-aminolevulinate from L-glutamyl-tRNA(Glu): step 2/2. The chain is Glutamate-1-semialdehyde 2,1-aminomutase from Methanoregula boonei (strain DSM 21154 / JCM 14090 / 6A8).